Consider the following 686-residue polypeptide: Protein SDA1 homolog (686 aa).

S232, S234, and S236 each carry phosphoserine. A coiled-coil region spans residues K254–M315. A disordered region spans residues L484–D508. Acidic residues predominate over residues T490–D508. T551 carries the post-translational modification Phosphothreonine. The tract at residues M563–E586 is disordered. A phosphoserine mark is found at S584, S588, and S594. The tract at residues K604–N649 is disordered.

Belongs to the SDA1 family.

It localises to the nucleus. The protein resides in the nucleolus. Functionally, required for 60S pre-ribosomal subunits export to the cytoplasm. In Rattus norvegicus (Rat), this protein is Protein SDA1 homolog (Sdad1).